The chain runs to 615 residues: Dihydroxy-acid dehydratase (615 aa).

Aspartate 81 provides a ligand contact to Mg(2+). Position 122 (cysteine 122) interacts with [2Fe-2S] cluster. Mg(2+) is bound by residues aspartate 123 and lysine 124. Position 124 is an N6-carboxylysine (lysine 124). Cysteine 195 is a [2Fe-2S] cluster binding site. A Mg(2+)-binding site is contributed by glutamate 491. Serine 517 functions as the Proton acceptor in the catalytic mechanism.

This sequence belongs to the IlvD/Edd family. As to quaternary structure, homodimer. Requires [2Fe-2S] cluster as cofactor. Mg(2+) serves as cofactor.

It catalyses the reaction (2R)-2,3-dihydroxy-3-methylbutanoate = 3-methyl-2-oxobutanoate + H2O. It carries out the reaction (2R,3R)-2,3-dihydroxy-3-methylpentanoate = (S)-3-methyl-2-oxopentanoate + H2O. Its pathway is amino-acid biosynthesis; L-isoleucine biosynthesis; L-isoleucine from 2-oxobutanoate: step 3/4. The protein operates within amino-acid biosynthesis; L-valine biosynthesis; L-valine from pyruvate: step 3/4. Functions in the biosynthesis of branched-chain amino acids. Catalyzes the dehydration of (2R,3R)-2,3-dihydroxy-3-methylpentanoate (2,3-dihydroxy-3-methylvalerate) into 2-oxo-3-methylpentanoate (2-oxo-3-methylvalerate) and of (2R)-2,3-dihydroxy-3-methylbutanoate (2,3-dihydroxyisovalerate) into 2-oxo-3-methylbutanoate (2-oxoisovalerate), the penultimate precursor to L-isoleucine and L-valine, respectively. This Pseudoalteromonas atlantica (strain T6c / ATCC BAA-1087) protein is Dihydroxy-acid dehydratase.